The chain runs to 1018 residues: Contactin-1 (1018 aa).

A signal peptide spans 1–20 (MKMWLLVSHLVIISITTCLA). Ig-like C2-type domains lie at 41-131 (PIFE…ATLS), 137-223 (PFPP…KSVF), 241-326 (PADI…ARIY), 331-407 (PEWV…AELK), 413-500 (PTFE…GTLV), and 504-601 (PTRI…LVVR). Intrachain disulfides connect Cys-65–Cys-114 and Cys-158–Cys-211. N-linked (GlcNAc...) asparagine glycans are attached at residues Asn-208 and Asn-258. A disulfide bond links Cys-263 and Cys-310. The N-linked (GlcNAc...) asparagine glycan is linked to Asn-338. Disulfide bonds link Cys-352/Cys-391 and Cys-436/Cys-484. Asn-457 and Asn-473 each carry an N-linked (GlcNAc...) asparagine glycan. An N-linked (GlcNAc...) (complex) asparagine glycan is attached at Asn-494. N-linked (GlcNAc...) asparagine glycosylation is present at Asn-521. A disulfide bond links Cys-526 and Cys-583. Asn-591 carries N-linked (GlcNAc...) asparagine glycosylation. Fibronectin type-III domains follow at residues 606–704 (PPGG…TDGA), 709–806 (APSD…SAQD), 811–906 (APTE…APPS), and 907–1000 (QPPR…TLSP). Positions 693 to 717 (SIPSNRIKTDGAAPNVAPSDVGGGG) are disordered. The N-linked (GlcNAc...) asparagine glycan is linked to Asn-933. Ser-993 is lipidated: GPI-anchor amidated serine. Residues 994–1018 (GAPTLSPSLLGLLLPAFGILVYLEF) constitute a propeptide, removed in mature form.

Belongs to the immunoglobulin superfamily. Contactin family. Monomer. Interacts with CNTNAP1 in cis form. Binds to the carbonic-anhydrase like domain of PTPRZ1. Interacts with NOTCH1 and TNR. Detected in a complex with NRCAM and PTPRB. Interacts with TASOR. As to expression, strongly expressed in brain and in neuroblastoma and retinoblastoma cell lines. Lower levels of expression in lung, pancreas, kidney and skeletal muscle.

It localises to the cell membrane. Functionally, contactins mediate cell surface interactions during nervous system development. Involved in the formation of paranodal axo-glial junctions in myelinated peripheral nerves and in the signaling between axons and myelinating glial cells via its association with CNTNAP1. Participates in oligodendrocytes generation by acting as a ligand of NOTCH1. Its association with NOTCH1 promotes NOTCH1 activation through the released notch intracellular domain (NICD) and subsequent translocation to the nucleus. Interaction with TNR induces a repulsion of neurons and an inhibition of neurite outgrowth. This Homo sapiens (Human) protein is Contactin-1 (CNTN1).